A 202-amino-acid chain; its full sequence is UPF0102 protein Dde_1093 (202 aa).

It belongs to the UPF0102 family.

The sequence is that of UPF0102 protein Dde_1093 from Oleidesulfovibrio alaskensis (strain ATCC BAA-1058 / DSM 17464 / G20) (Desulfovibrio alaskensis).